Reading from the N-terminus, the 323-residue chain is Olfactory receptor 2AE1 (323 aa).

At Met-1 to Leu-25 the chain is on the extracellular side. Asn-5 carries an N-linked (GlcNAc...) asparagine glycan. A helical transmembrane segment spans residues Phe-26–Ile-49. Residues Cys-50–Thr-57 lie on the Cytoplasmic side of the membrane. A helical membrane pass occupies residues Pro-58 to Leu-79. Over Lys-80–Gln-100 the chain is Extracellular. Cysteines 97 and 189 form a disulfide. The chain crosses the membrane as a helical span at residues His-101 to Tyr-120. The Cytoplasmic portion of the chain corresponds to Asp-121–Lys-139. A helical transmembrane segment spans residues Val-140–Ile-158. The Extracellular portion of the chain corresponds to His-159–Tyr-195. Residues Glu-196–Val-218 form a helical membrane-spanning segment. The Cytoplasmic segment spans residues Phe-219–Asn-235. The chain crosses the membrane as a helical span at residues Ala-236–Tyr-258. The Extracellular segment spans residues Met-259–Lys-271. A helical membrane pass occupies residues Val-272–Leu-291. At Arg-292–Val-323 the chain is on the cytoplasmic side.

Belongs to the G-protein coupled receptor 1 family.

It localises to the cell membrane. Odorant receptor. The polypeptide is Olfactory receptor 2AE1 (OR2AE1) (Homo sapiens (Human)).